Consider the following 346-residue polypeptide: Phosphoribosylformylglycinamidine cyclo-ligase (346 aa).

This sequence belongs to the AIR synthase family.

Its subcellular location is the cytoplasm. It carries out the reaction 2-formamido-N(1)-(5-O-phospho-beta-D-ribosyl)acetamidine + ATP = 5-amino-1-(5-phospho-beta-D-ribosyl)imidazole + ADP + phosphate + H(+). Its pathway is purine metabolism; IMP biosynthesis via de novo pathway; 5-amino-1-(5-phospho-D-ribosyl)imidazole from N(2)-formyl-N(1)-(5-phospho-D-ribosyl)glycinamide: step 2/2. The polypeptide is Phosphoribosylformylglycinamidine cyclo-ligase (Erwinia tasmaniensis (strain DSM 17950 / CFBP 7177 / CIP 109463 / NCPPB 4357 / Et1/99)).